Here is a 465-residue protein sequence, read N- to C-terminus: Lactaldehyde dehydrogenase (465 aa).

Residue 220 to 225 (GSVEVG) participates in NAD(+) binding. Catalysis depends on residues Glu240 and Cys274.

This sequence belongs to the aldehyde dehydrogenase family. Homotetramer.

The enzyme catalyses (S)-lactaldehyde + NAD(+) + H2O = (S)-lactate + NADH + 2 H(+). The protein operates within cofactor biosynthesis; coenzyme F420 biosynthesis. Involved in F420 biosynthesis through the oxidation of lactaldehyde to lactate. The protein is Lactaldehyde dehydrogenase of Methanococcus maripaludis (strain DSM 14266 / JCM 13030 / NBRC 101832 / S2 / LL).